Here is a 358-residue protein sequence, read N- to C-terminus: MKFILMNQAAELPIEFLPRDGAYRKGRLLDSKNAEVENTTESDILQDARRAAEAHRRVRYKVQSIIKPGMTLLEIVKSIEDSTRILLSGERNNGIGFPAGMSMNSCAAHYSVNPGEKDIILTENDVLKIDFGTHSNGRIMDSAFTIAFKEEFEPLLMAAKEGTETGIRSLGIDARVCDIGRDINEVISSYEMEVDGKKWAIRPVSDLHGHSISQFKIHGGISIPAVNNRDPTRITGDTFYAVETFATTGEGFINDRSPCSHFMINTHKSRKLYNKDLIKVYEFVRDSFGTLPFSPRHLDYYNLVEGSALKSVNLLTMMGLFTPYPPLNDIDGSKVAQFEHTVYLSESGKEILTRGDDY.

H109 contacts substrate. A divalent metal cation is bound by residues D130, D141, and H210. H218 is a substrate binding site. A divalent metal cation is bound by residues E243 and E339.

Belongs to the peptidase M24A family. Methionine aminopeptidase eukaryotic type 2 subfamily. It depends on Co(2+) as a cofactor. The cofactor is Zn(2+). Mn(2+) serves as cofactor. Requires Fe(2+) as cofactor.

The protein localises to the cytoplasm. The catalysed reaction is Release of N-terminal amino acids, preferentially methionine, from peptides and arylamides.. Its activity is regulated as follows. Irreversibly inhibited by the fungal metabolite fumagillin and the fumagillin analog TNP470, antiangiogenic drugs. In terms of biological role, cotranslationally removes the N-terminal methionine from nascent proteins. The N-terminal methionine is often cleaved when the second residue in the primary sequence is small and uncharged (Met-Ala-, Cys, Gly, Pro, Ser, Thr, or Val). The sequence is that of Methionine aminopeptidase 2 from Encephalitozoon hellem (strain ATCC 50504) (Microsporidian parasite).